A 425-amino-acid chain; its full sequence is Serine hydroxymethyltransferase (425 aa).

Residues Leu123 and 127–129 (GHL) contribute to the (6S)-5,6,7,8-tetrahydrofolate site. The residue at position 232 (Lys232) is an N6-(pyridoxal phosphate)lysine. Position 248 (Glu248) interacts with (6S)-5,6,7,8-tetrahydrofolate.

It belongs to the SHMT family. Homodimer. Pyridoxal 5'-phosphate serves as cofactor.

It localises to the cytoplasm. The enzyme catalyses (6R)-5,10-methylene-5,6,7,8-tetrahydrofolate + glycine + H2O = (6S)-5,6,7,8-tetrahydrofolate + L-serine. The protein operates within one-carbon metabolism; tetrahydrofolate interconversion. It participates in amino-acid biosynthesis; glycine biosynthesis; glycine from L-serine: step 1/1. Functionally, catalyzes the reversible interconversion of serine and glycine with tetrahydrofolate (THF) serving as the one-carbon carrier. This reaction serves as the major source of one-carbon groups required for the biosynthesis of purines, thymidylate, methionine, and other important biomolecules. Also exhibits THF-independent aldolase activity toward beta-hydroxyamino acids, producing glycine and aldehydes, via a retro-aldol mechanism. This Anaplasma phagocytophilum (strain HZ) protein is Serine hydroxymethyltransferase.